Reading from the N-terminus, the 193-residue chain is Probable GTP-binding protein EngB (193 aa).

The region spanning 22–193 (QLPEFALAGR…EAWGALQKWM (172 aa)) is the EngB-type G domain. GTP contacts are provided by residues 30 to 37 (GRSNVGKS), 57 to 61 (GKTQT), 75 to 78 (DVPG), 142 to 145 (TKAD), and 174 to 176 (FSA). Mg(2+)-binding residues include S37 and T59.

Belongs to the TRAFAC class TrmE-Era-EngA-EngB-Septin-like GTPase superfamily. EngB GTPase family. It depends on Mg(2+) as a cofactor.

Functionally, necessary for normal cell division and for the maintenance of normal septation. This is Probable GTP-binding protein EngB from Anoxybacillus flavithermus (strain DSM 21510 / WK1).